Reading from the N-terminus, the 371-residue chain is tRNA 2-selenouridine synthase (371 aa).

The Rhodanese domain occupies 12 to 135; that stretch reads FLDDVPMMDM…MRTFLLDTTQ (124 aa). The S-selanylcysteine intermediate role is filled by Cys-95.

This sequence belongs to the SelU family. In terms of assembly, monomer.

The enzyme catalyses 5-methylaminomethyl-2-thiouridine(34) in tRNA + selenophosphate + (2E)-geranyl diphosphate + H2O + H(+) = 5-methylaminomethyl-2-selenouridine(34) in tRNA + (2E)-thiogeraniol + phosphate + diphosphate. It carries out the reaction 5-methylaminomethyl-2-thiouridine(34) in tRNA + (2E)-geranyl diphosphate = 5-methylaminomethyl-S-(2E)-geranyl-thiouridine(34) in tRNA + diphosphate. The catalysed reaction is 5-methylaminomethyl-S-(2E)-geranyl-thiouridine(34) in tRNA + selenophosphate + H(+) = 5-methylaminomethyl-2-(Se-phospho)selenouridine(34) in tRNA + (2E)-thiogeraniol. It catalyses the reaction 5-methylaminomethyl-2-(Se-phospho)selenouridine(34) in tRNA + H2O = 5-methylaminomethyl-2-selenouridine(34) in tRNA + phosphate. Its function is as follows. Involved in the post-transcriptional modification of the uridine at the wobble position (U34) of tRNA(Lys), tRNA(Glu) and tRNA(Gln). Catalyzes the conversion of 2-thiouridine (S2U-RNA) to 2-selenouridine (Se2U-RNA). Acts in a two-step process involving geranylation of 2-thiouridine (S2U) to S-geranyl-2-thiouridine (geS2U) and subsequent selenation of the latter derivative to 2-selenouridine (Se2U) in the tRNA chain. The protein is tRNA 2-selenouridine synthase of Pseudomonas entomophila (strain L48).